We begin with the raw amino-acid sequence, 379 residues long: Cobalt-precorrin-5B C(1)-methyltransferase (379 aa).

Belongs to the CbiD family.

The catalysed reaction is Co-precorrin-5B + S-adenosyl-L-methionine = Co-precorrin-6A + S-adenosyl-L-homocysteine. It participates in cofactor biosynthesis; adenosylcobalamin biosynthesis; cob(II)yrinate a,c-diamide from sirohydrochlorin (anaerobic route): step 6/10. Catalyzes the methylation of C-1 in cobalt-precorrin-5B to form cobalt-precorrin-6A. In Salmonella typhimurium (strain LT2 / SGSC1412 / ATCC 700720), this protein is Cobalt-precorrin-5B C(1)-methyltransferase.